Here is a 129-residue protein sequence, read N- to C-terminus: Small ribosomal subunit protein uS11 (129 aa).

Belongs to the universal ribosomal protein uS11 family. In terms of assembly, part of the 30S ribosomal subunit. Interacts with proteins S7 and S18. Binds to IF-3.

Located on the platform of the 30S subunit, it bridges several disparate RNA helices of the 16S rRNA. Forms part of the Shine-Dalgarno cleft in the 70S ribosome. This Rhizorhabdus wittichii (strain DSM 6014 / CCUG 31198 / JCM 15750 / NBRC 105917 / EY 4224 / RW1) (Sphingomonas wittichii) protein is Small ribosomal subunit protein uS11.